Here is a 482-residue protein sequence, read N- to C-terminus: Keratin, type I cytoskeletal 39 (482 aa).

Residues 1–24 (MDTKGSTVTISSSTPPQNCSGNTN) are disordered. The tract at residues 1–91 (MDTKGSTVTI…RCTEGINTHE (91 aa)) is head. The IF rod domain occupies 91 to 402 (EKETMQILNE…SLLESLDGRL (312 aa)). Positions 92-126 (KETMQILNERLANYLEKVRMLEGENADLEDKIQEA) are coil 1A. The linker 1 stretch occupies residues 127–137 (CSKALPILCPD). The coil 1B stretch occupies residues 138-238 (YLSYYTTIEE…HEEEVNSLQC (101 aa)). The tract at residues 239–254 (QLGDRINIEVTAAPSV) is linker 12. The coil 2 stretch occupies residues 255 to 398 (DLNQILQEMR…ATYRSLLESL (144 aa)). Positions 399 to 482 (DGRLPCNPCA…PCYITRATKV (84 aa)) are tail.

The protein belongs to the intermediate filament family. In terms of assembly, heterotetramer of two type I and two type II keratins.

In terms of biological role, may play a role in late hair differentiation. The polypeptide is Keratin, type I cytoskeletal 39 (Krt39) (Mus musculus (Mouse)).